The sequence spans 262 residues: Glutamate racemase (262 aa).

Substrate contacts are provided by residues 7–8 and 39–40; these read DS and YG. Catalysis depends on Cys70, which acts as the Proton donor/acceptor. A substrate-binding site is contributed by 71-72; the sequence is NT. Cys182 functions as the Proton donor/acceptor in the catalytic mechanism. 183-184 is a substrate binding site; it reads TH.

Belongs to the aspartate/glutamate racemases family.

It carries out the reaction L-glutamate = D-glutamate. The protein operates within cell wall biogenesis; peptidoglycan biosynthesis. In terms of biological role, provides the (R)-glutamate required for cell wall biosynthesis. The chain is Glutamate racemase from Campylobacter concisus (strain 13826).